Consider the following 231-residue polypeptide: 5'-methylthioadenosine/S-adenosylhomocysteine nucleosidase (231 aa).

Glutamate 12 functions as the Proton acceptor in the catalytic mechanism. Residues glycine 78, valine 153, and 174–175 each bind substrate; that span reads ME. Catalysis depends on aspartate 198, which acts as the Proton donor.

The protein belongs to the PNP/UDP phosphorylase family. MtnN subfamily.

The catalysed reaction is S-adenosyl-L-homocysteine + H2O = S-(5-deoxy-D-ribos-5-yl)-L-homocysteine + adenine. It catalyses the reaction S-methyl-5'-thioadenosine + H2O = 5-(methylsulfanyl)-D-ribose + adenine. The enzyme catalyses 5'-deoxyadenosine + H2O = 5-deoxy-D-ribose + adenine. The protein operates within amino-acid biosynthesis; L-methionine biosynthesis via salvage pathway; S-methyl-5-thio-alpha-D-ribose 1-phosphate from S-methyl-5'-thioadenosine (hydrolase route): step 1/2. Functionally, catalyzes the irreversible cleavage of the glycosidic bond in both 5'-methylthioadenosine (MTA) and S-adenosylhomocysteine (SAH/AdoHcy) to adenine and the corresponding thioribose, 5'-methylthioribose and S-ribosylhomocysteine, respectively. Also cleaves 5'-deoxyadenosine, a toxic by-product of radical S-adenosylmethionine (SAM) enzymes, into 5-deoxyribose and adenine. This chain is 5'-methylthioadenosine/S-adenosylhomocysteine nucleosidase, found in Vibrio atlanticus (strain LGP32) (Vibrio splendidus (strain Mel32)).